Reading from the N-terminus, the 209-residue chain is Urease accessory protein UreG (209 aa).

18–25 (GPVGSGKT) serves as a coordination point for GTP.

The protein belongs to the SIMIBI class G3E GTPase family. UreG subfamily. Homodimer. UreD, UreF and UreG form a complex that acts as a GTP-hydrolysis-dependent molecular chaperone, activating the urease apoprotein by helping to assemble the nickel containing metallocenter of UreC. The UreE protein probably delivers the nickel.

It localises to the cytoplasm. Its function is as follows. Facilitates the functional incorporation of the urease nickel metallocenter. This process requires GTP hydrolysis, probably effectuated by UreG. The chain is Urease accessory protein UreG from Cupriavidus pinatubonensis (strain JMP 134 / LMG 1197) (Cupriavidus necator (strain JMP 134)).